Consider the following 256-residue polypeptide: Major prion protein (256 aa).

The N-terminal stretch at 1-24 (MVKSHIGSWILVLFVAMWSDVGLC) is a signal peptide. An interaction with ADGRG6 region spans residues 25–41 (KKRPKPGGGWNTGGSRY). An interaction with GRB2, ERI3 and SYN1 region spans residues 25 to 233 (KKRPKPGGGW…ESEAYYQRRA (209 aa)). The disordered stretch occupies residues 28–110 (PKPGGGWNTG…QWNKPSKPKT (83 aa)). 5 tandem repeats follow at residues 54–62 (PQGGGGWGQ), 63–70 (PHGGGWGQ), 71–78 (PHGGGWGQ), 79–86 (PHGGGWGQ), and 87–95 (PHGGGGWGQ). Residues 54–95 (PQGGGGWGQPHGGGWGQPHGGGWGQPHGGGWGQPHGGGGWGQ) form a 5 X 8 AA tandem repeats of P-H-G-G-G-W-G-Q region. Positions 55 to 97 (QGGGGWGQPHGGGWGQPHGGGWGQPHGGGWGQPHGGGGWGQGG) are enriched in gly residues. His-64, Gly-65, Gly-66, His-72, Gly-73, Gly-74, His-80, Gly-81, Gly-82, His-88, Gly-90, and Gly-91 together coordinate Cu(2+). A disulfide bond links Cys-182 and Cys-217. N-linked (GlcNAc...) asparagine glycans are attached at residues Asn-184 and Asn-200. Ala-233 is lipidated: GPI-anchor amidated alanine. Positions 234 to 256 (SAILFSSPPVILLISFLIFLIVG) are cleaved as a propeptide — removed in mature form.

This sequence belongs to the prion family. As to quaternary structure, monomer and homodimer. Has a tendency to aggregate into amyloid fibrils containing a cross-beta spine, formed by a steric zipper of superposed beta-strands. Soluble oligomers may represent an intermediate stage on the path to fibril formation. Copper binding may promote oligomerization. Interacts with GRB2, APP, ERI3/PRNPIP and SYN1. Mislocalized cytosolically exposed PrP interacts with MGRN1; this interaction alters MGRN1 subcellular location and causes lysosomal enlargement. Interacts with APP. Interacts with KIAA1191. Interacts with ADGRG6.

Its subcellular location is the cell membrane. It is found in the golgi apparatus. Its primary physiological function is unclear. May play a role in neuronal development and synaptic plasticity. May be required for neuronal myelin sheath maintenance. May promote myelin homeostasis through acting as an agonist for ADGRG6 receptor. May play a role in iron uptake and iron homeostasis. Soluble oligomers are toxic to cultured neuroblastoma cells and induce apoptosis (in vitro). Association with GPC1 (via its heparan sulfate chains) targets PRNP to lipid rafts. Also provides Cu(2+) or Zn(2+) for the ascorbate-mediated GPC1 deaminase degradation of its heparan sulfate side chains. The chain is Major prion protein (PRNP) from Felis catus (Cat).